The following is a 296-amino-acid chain: MQDRFIRSITQLPTPLADALIPLLHQGFAGHIDAQHLAELVKSSNMTESEVLLALLPIAAALAKPPISEFYVGAIAKGKSGDIYMGANLELPGEALFHSVHAEQSAISHAWLSGESQIVDMIVNASPCGHCRQFMNELVDGGQIKIHLPSQDSHLLSYYLPYAFGPKDLNVQSPLLVKQETEFALDSSDPMVIEALDHAGLSYAPYTQSYAAVVLETADGATYCGRYAENAAFNPSMLPMQMALSNLTRHNRDFAEIRRAVLVESSQGKISLVGAAMDALHAVAAIELEHIVVDPI.

2 CMP/dCMP-type deaminase domains span residues 47–167 (TESE…FGPK) and 186–296 (DSSD…VDPI). 88–90 (NLE) serves as a coordination point for substrate. Histidine 101 lines the Zn(2+) pocket. Residue glutamate 103 is the Proton donor of the active site. Zn(2+)-binding residues include cysteine 128 and cysteine 131.

It belongs to the cytidine and deoxycytidylate deaminase family. As to quaternary structure, homodimer. It depends on Zn(2+) as a cofactor.

It catalyses the reaction cytidine + H2O + H(+) = uridine + NH4(+). It carries out the reaction 2'-deoxycytidine + H2O + H(+) = 2'-deoxyuridine + NH4(+). Its function is as follows. This enzyme scavenges exogenous and endogenous cytidine and 2'-deoxycytidine for UMP synthesis. In Shewanella oneidensis (strain ATCC 700550 / JCM 31522 / CIP 106686 / LMG 19005 / NCIMB 14063 / MR-1), this protein is Cytidine deaminase.